The chain runs to 521 residues: Phosphoenolpyruvate carboxykinase (ATP) (521 aa).

The substrate site is built by arginine 52, tyrosine 186, and lysine 192. ATP-binding positions include lysine 192, histidine 211, and 227–235 (GLSGTGKTT). Mn(2+)-binding residues include lysine 192 and histidine 211. Residue aspartate 248 coordinates Mn(2+). ATP contacts are provided by residues glutamate 276, arginine 313, 432–433 (RI), and threonine 438. A substrate-binding site is contributed by arginine 313.

It belongs to the phosphoenolpyruvate carboxykinase (ATP) family. The cofactor is Mn(2+).

The protein localises to the cytoplasm. It carries out the reaction oxaloacetate + ATP = phosphoenolpyruvate + ADP + CO2. It participates in carbohydrate biosynthesis; gluconeogenesis. In terms of biological role, involved in the gluconeogenesis. Catalyzes the conversion of oxaloacetate (OAA) to phosphoenolpyruvate (PEP) through direct phosphoryl transfer between the nucleoside triphosphate and OAA. This is Phosphoenolpyruvate carboxykinase (ATP) from Caldanaerobacter subterraneus subsp. tengcongensis (strain DSM 15242 / JCM 11007 / NBRC 100824 / MB4) (Thermoanaerobacter tengcongensis).